The following is a 492-amino-acid chain: Catalase isozyme B (492 aa).

The segment at 1–20 (MDPYKHRPSSGSNSTFWTTN) is disordered. Positions 9–20 (SSGSNSTFWTTN) are enriched in polar residues. Arg62 contacts heme. The active site involves His65. Residue Arg102 coordinates heme. Residue Asn138 is part of the active site. Phe151 is a heme binding site. Tyr210 is modified (phosphotyrosine). Residues 325–348 (CPAIIVPGIHYSDDKLLQTRIFSY) constitute a cross-link (3-(S-cysteinyl)-tyrosine (Cys-Tyr)). Heme contacts are provided by Arg344, Tyr348, and Arg355. The short motif at 484–492 (SRLNLKPNM) is the Peroxisome targeting signal element.

It belongs to the catalase family. In terms of assembly, homotetramer. Interacts with GLO1 and GLO4; these interactions are disturbed by alpha-hydroxy-2-pyridinemethanesulfonic acid (HPMS) and salicylic acid (SA). Interacts with STRK1 at the plasma membrane. The cofactor is heme. As to expression, predominantly expressed in roots and, at low levels, in leaves (e.g. sheaths). Detected in seeds. Also present in panicles and culms. Observed in stems and anthers.

It is found in the peroxisome. Its subcellular location is the glyoxysome. The protein resides in the cell membrane. The enzyme catalyses 2 H2O2 = O2 + 2 H2O. Its activity is regulated as follows. Strongly inhibited by beta-mercaptoethanol, sodium azide and potassium cyanide. Slightly repressed by 3-amino-1,2,4-triazole (3-AT). Activity is repressed proportionally to increased concentration of NaCl, KCl, LiCl and MgCl(2). In terms of biological role, occurs in almost all aerobically respiring organisms and serves to protect cells from the toxic effects of hydrogen peroxide. May prevent the excessive accumulation of H(2)O(2) during water stress in response to the accumulation of abscisic acid (ABA). Involved in the modulation of ROS levels related to root growth regulation. Required for pollen viability and floret fertility upon heat stress (HS) by detoxifying reactive oxygen species (ROS) and malondialdehyde (MDA) accumulation in developing anthers exposed to HS. The sequence is that of Catalase isozyme B (CATB) from Oryza sativa subsp. japonica (Rice).